A 460-amino-acid polypeptide reads, in one-letter code: Receptor-like cytosolic serine/threonine-protein kinase RBK2 (460 aa).

The segment at 1-67 is disordered; sequence MNSASAHDLR…DADTDVQCKN (67 aa). The segment covering 7–23 has biased composition (basic and acidic residues); sequence HDLRLLEVDKEKQDPKS. One can recognise a Protein kinase domain in the interval 143-415; the sequence is FSPENIIGRG…VELLLGHEDV (273 aa). ATP is bound by residues 149–157 and Lys-171; that span reads IGRGGYADV. Asp-267 acts as the Proton acceptor in catalysis. Thr-307 is subject to Phosphothreonine. Tyr-315 carries the post-translational modification Phosphotyrosine.

The protein belongs to the protein kinase superfamily. Ser/Thr protein kinase family. As to quaternary structure, interacts with ARAC5 and ARAC10.

The protein localises to the cytoplasm. It catalyses the reaction L-seryl-[protein] + ATP = O-phospho-L-seryl-[protein] + ADP + H(+). The enzyme catalyses L-threonyl-[protein] + ATP = O-phospho-L-threonyl-[protein] + ADP + H(+). This chain is Receptor-like cytosolic serine/threonine-protein kinase RBK2 (RBK2), found in Arabidopsis thaliana (Mouse-ear cress).